The sequence spans 316 residues: Type II restriction enzyme BsuBI (316 aa).

It belongs to the BsuBI/PstI type II restriction endonuclease family. In terms of assembly, homodimer. The cofactor is Mg(2+).

The enzyme catalyses Endonucleolytic cleavage of DNA to give specific double-stranded fragments with terminal 5'-phosphates.. Its function is as follows. A P subtype restriction enzyme that recognizes the double-stranded sequence 5'-CTGCAG-3' and cleaves after A-5. This chain is Type II restriction enzyme BsuBI (hsdBR), found in Bacillus subtilis.